Reading from the N-terminus, the 73-residue chain is Translation initiation factor IF-1 (73 aa).

Positions 1-73 (MAKKEGALEL…TRGRIVYRHK (73 aa)) constitute an S1-like domain.

Belongs to the IF-1 family. As to quaternary structure, component of the 30S ribosomal translation pre-initiation complex which assembles on the 30S ribosome in the order IF-2 and IF-3, IF-1 and N-formylmethionyl-tRNA(fMet); mRNA recruitment can occur at any time during PIC assembly.

It localises to the cytoplasm. Its function is as follows. One of the essential components for the initiation of protein synthesis. Stabilizes the binding of IF-2 and IF-3 on the 30S subunit to which N-formylmethionyl-tRNA(fMet) subsequently binds. Helps modulate mRNA selection, yielding the 30S pre-initiation complex (PIC). Upon addition of the 50S ribosomal subunit IF-1, IF-2 and IF-3 are released leaving the mature 70S translation initiation complex. The polypeptide is Translation initiation factor IF-1 (Cutibacterium acnes (strain DSM 16379 / KPA171202) (Propionibacterium acnes)).